Here is a 364-residue protein sequence, read N- to C-terminus: D-alanine--D-alanine ligase (364 aa).

One can recognise an ATP-grasp domain in the interval 140-346 (KKLALLEGIP…YSQLIDKLIS (207 aa)). 173–228 (ESEFSYPVFVKPANSGSSVGISKAKDREDLVLAIHEAFLYDTKILIEQAINAREIE) is an ATP binding site. Residues D299, E313, and N315 each coordinate Mg(2+).

It belongs to the D-alanine--D-alanine ligase family. The cofactor is Mg(2+). It depends on Mn(2+) as a cofactor.

The protein resides in the cytoplasm. It catalyses the reaction 2 D-alanine + ATP = D-alanyl-D-alanine + ADP + phosphate + H(+). It functions in the pathway cell wall biogenesis; peptidoglycan biosynthesis. Cell wall formation. In Caldicellulosiruptor bescii (strain ATCC BAA-1888 / DSM 6725 / KCTC 15123 / Z-1320) (Anaerocellum thermophilum), this protein is D-alanine--D-alanine ligase.